Consider the following 325-residue polypeptide: D-xylose 1-dehydrogenase (NADP(+)) 2 (325 aa).

An N-terminal signal peptide occupies residues 1–22 (MMFGILGTAGIGVKSVIPAVQA).

This sequence belongs to the Gfo/Idh/MocA family. As to quaternary structure, homotetramer.

The protein resides in the secreted. The catalysed reaction is D-xylose + NADP(+) = D-xylono-1,5-lactone + NADPH + H(+). Functionally, NADP-dependent D-xylose dehydrogenase involved in the degradation of D-xylose, a major component of hemicelluloses such as xylan. Even if it shows D-xylose dehydrogenase activity, it is not essential for D-xylose degradation. The polypeptide is D-xylose 1-dehydrogenase (NADP(+)) 2 (Haloferax volcanii (strain ATCC 29605 / DSM 3757 / JCM 8879 / NBRC 14742 / NCIMB 2012 / VKM B-1768 / DS2) (Halobacterium volcanii)).